The sequence spans 318 residues: Beta-sarcoglycan (318 aa).

The disordered stretch occupies residues 1–32; it reads MAAAAAAAAEQQSSNGPVKKSMREKAVERRSV. Residues 1–65 lie on the Cytoplasmic side of the membrane; the sequence is MAAAAAAAAE…GLRGRKGNLA (65 aa). Residues 21-32 are compositionally biased toward basic and acidic residues; that stretch reads SMREKAVERRSV. The helical; Signal-anchor for type II membrane protein transmembrane segment at 66–86 threads the bilayer; it reads ICVIILLFILAVINLIITLVI. Over 87–318 the chain is Extracellular; it reads WAVIRIGPNG…ISDNPCGNTH (232 aa). 3 N-linked (GlcNAc...) asparagine glycosylation sites follow: Asn158, Asn211, and Asn258. 2 disulfide bridges follow: Cys288–Cys314 and Cys290–Cys307.

The protein belongs to the sarcoglycan beta/delta/gamma/zeta family. As to quaternary structure, cross-link to form 2 major subcomplexes: one consisting of SGCB, SGCD and SGCG and the other consisting of SGCB and SGCD. The association between SGCB and SGCG is particularly strong while SGCA is loosely associated with the other sarcoglycans. Disulfide bonds are present. As to expression, highest expression in heart and skeletal muscle. Low expression in brain, kidney, placenta, pancreas and lung. High expression in fetal brain. Also found in fetal lung, kidney and liver.

Its subcellular location is the cell membrane. The protein resides in the sarcolemma. The protein localises to the cytoplasm. It localises to the cytoskeleton. In terms of biological role, component of the sarcoglycan complex, a subcomplex of the dystrophin-glycoprotein complex which forms a link between the F-actin cytoskeleton and the extracellular matrix. This Homo sapiens (Human) protein is Beta-sarcoglycan (SGCB).